A 510-amino-acid chain; its full sequence is Pentatricopeptide repeat-containing protein At1g71060, mitochondrial (510 aa).

The transit peptide at 1–14 (MVFSRFFRVTGVNL) directs the protein to the mitochondrion. 10 PPR repeats span residues 127-157 (TTSN…MKAK), 161-195 (SKET…GFKM), 196-230 (ESSD…RFEP), 231-265 (DIKS…GFEP), 266-300 (DVVA…NCKP), 301-335 (SPHI…GFPL), 336-370 (EAPT…GVGP), 371-401 (NART…MSCE), 403-437 (TVST…GVLP), and 438-472 (GMHM…GIRP).

It belongs to the PPR family. P subfamily.

Its subcellular location is the mitochondrion. This Arabidopsis thaliana (Mouse-ear cress) protein is Pentatricopeptide repeat-containing protein At1g71060, mitochondrial.